The primary structure comprises 552 residues: Probable malate:quinone oxidoreductase (552 aa).

Residues 530 to 552 (DAKPATPEAKPAQASSPQHDMAL) form a disordered region. Polar residues predominate over residues 542–552 (QASSPQHDMAL).

It belongs to the MQO family. FAD serves as cofactor.

The catalysed reaction is (S)-malate + a quinone = a quinol + oxaloacetate. The protein operates within carbohydrate metabolism; tricarboxylic acid cycle; oxaloacetate from (S)-malate (quinone route): step 1/1. In Cronobacter sakazakii (strain ATCC BAA-894) (Enterobacter sakazakii), this protein is Probable malate:quinone oxidoreductase.